Consider the following 37-residue polypeptide: MKIRASVRKICEKCRLIRRRGRIIVICFNPRHKQRQG.

It belongs to the bacterial ribosomal protein bL36 family.

It is found in the plastid. The protein localises to the chloroplast. The sequence is that of Large ribosomal subunit protein bL36c from Liriodendron tulipifera (Tuliptree).